An 81-amino-acid polypeptide reads, in one-letter code: UPF0729 protein C18orf32 homolog (81 aa).

Positions 45-58 (AASDQKVSEKSNGT) are enriched in polar residues. The tract at residues 45–81 (AASDQKVSEKSNGTCKPESNGEATANGSTIAADKKTD) is disordered.

The protein belongs to the UPF0729 family.

The sequence is that of UPF0729 protein C18orf32 homolog from Anoplopoma fimbria (Sablefish).